The sequence spans 441 residues: Homogentisate 1,2-dioxygenase (441 aa).

His-287 serves as the catalytic Proton acceptor. 2 residues coordinate Fe cation: His-330 and Glu-336. 2 residues coordinate homogentisate: Tyr-345 and His-366. Residue His-366 coordinates Fe cation.

Belongs to the homogentisate dioxygenase family. Hexamer; dimer of trimers. The cofactor is Fe cation.

The enzyme catalyses homogentisate + O2 = 4-maleylacetoacetate + H(+). It functions in the pathway amino-acid degradation; L-phenylalanine degradation; acetoacetate and fumarate from L-phenylalanine: step 4/6. In terms of biological role, involved in the catabolism of homogentisate (2,5-dihydroxyphenylacetate or 2,5-OH-PhAc), a central intermediate in the degradation of phenylalanine and tyrosine. Catalyzes the oxidative ring cleavage of the aromatic ring of homogentisate to yield maleylacetoacetate. The polypeptide is Homogentisate 1,2-dioxygenase (Xanthomonas oryzae pv. oryzae (strain MAFF 311018)).